The primary structure comprises 745 residues: Elongation factor G, mitochondrial (745 aa).

One can recognise a tr-type G domain in the interval 40–317 (ERIRNIGISA…AVLDYLPNPG (278 aa)). GTP-binding positions include 49–56 (AHIDSGKT), 116–120 (DTPGH), and 170–173 (NKLD).

It belongs to the TRAFAC class translation factor GTPase superfamily. Classic translation factor GTPase family. EF-G/EF-2 subfamily.

Its subcellular location is the mitochondrion. Its pathway is protein biosynthesis; polypeptide chain elongation. Its function is as follows. Mitochondrial GTPase that catalyzes the GTP-dependent ribosomal translocation step during translation elongation. During this step, the ribosome changes from the pre-translocational (PRE) to the post-translocational (POST) state as the newly formed A-site-bound peptidyl-tRNA and P-site-bound deacylated tRNA move to the P and E sites, respectively. Catalyzes the coordinated movement of the two tRNA molecules, the mRNA and conformational changes in the ribosome. Essential during development as it acts as a retrograde signal from mitochondria to the nucleus to slow down cell proliferation if mitochondrial energy output is low. The sequence is that of Elongation factor G, mitochondrial from Drosophila sechellia (Fruit fly).